The primary structure comprises 456 residues: Solute carrier family 38 member 6 (456 aa).

Methionine 1 is modified (N-acetylmethionine). 2 positions are modified to phosphoserine: serine 4 and serine 7. Helical transmembrane passes span 42 to 62 (SPGV…MGSG), 85 to 105 (VALL…QTAV), 111 to 131 (LGLF…IIIQ), 170 to 190 (LLII…KIGF), and 191 to 211 (LGYT…VVII). Residues cysteine 218 and cysteine 238 are joined by a disulfide bond. N-linked (GlcNAc...) asparagine glycosylation occurs at asparagine 233. The chain crosses the membrane as a helical span at residues 250–270 (AYALPTMAFSFLCHTSILPIY). N-linked (GlcNAc...) asparagine glycosylation occurs at asparagine 283. Transmembrane regions (helical) follow at residues 288–308 (AIAL…LTFY), 327–347 (VVVM…VPLI), 371–391 (FLIT…VPDI), 394–414 (VFGV…PGLF), and 431–451 (AFVL…LIIF).

It belongs to the amino acid/polyamine transporter 2 family.

It is found in the cell membrane. The protein resides in the synapse. The catalysed reaction is L-glutamine(out) = L-glutamine(in). It carries out the reaction L-glutamate(out) = L-glutamate(in). Amino acid transporter with an apparent selectivity for L-glutamine and L-glutamate. May facilitate glutamine uptake in excitatory neurons. The transport mechanism remains to be elucidated. This Homo sapiens (Human) protein is Solute carrier family 38 member 6.